A 363-amino-acid polypeptide reads, in one-letter code: Nicotinamide adenine dinucleotide transporter 2, mitochondrial (363 aa).

Solcar repeat units lie at residues 15-107 (REVA…LKDV), 115-203 (LSIG…IKQY), and 215-305 (LSPG…MLRF). The next 6 helical transmembrane spans lie at 21–41 (AGAGATAGAIAATFVCPLDVI), 82–102 (GLSPTIIALLPNWAVYFSVYG), 121–141 (MIAAAGAGAATSIATNPLWVV), 176–196 (LYSGILPSLAGVSHVAIQFPA), 215–235 (LSPGNVAIASSIAKVIASILT), and 277–299 (LYRGCATNLLRTTPSAVITFTTY). The tract at residues 313–363 (ETNRSDDRRREEERKNLVSRRGEEEDKDLGLRESQTQSNKISTPHIPLGSK) is disordered. Residues 315-343 (NRSDDRRREEERKNLVSRRGEEEDKDLGL) show a composition bias toward basic and acidic residues. Polar residues predominate over residues 345–354 (ESQTQSNKIS).

Belongs to the mitochondrial carrier (TC 2.A.29) family. Highly expressed in young meristematic shoot area, vascular bundles of leaves, developing siliques including the funiculi, petal veins, developing pollen and central cylinder of roots.

The protein resides in the mitochondrion membrane. With respect to regulation, inhibited by pyridoxal 5'-phosphate, bathophenanthroline, tannic acid, mersalyl, mercuric chloride, p-hydroxymercuribenzoate, p-hydroxymercuribenzoate sulfonate, bromocresol purple and N-ethylmaleimide. Mediates the NAD(+) import into chloroplast. Favors the NAD(+)(in)/ADP or AMP(out) antiport exchange, but is also able to catalyze a low unidirectional transport (uniport) of NAD(+). Transports NAD(+), nicotinic acid adenine dinucleotide, nicotinamide mononucleotide, nicotinic acid mononucleotide, FAD, FMN, TTP, TDP, TMP, UTP, UDP, UMP, CTP, CDP, CMP, GTP, GDP, GMP, 3'-AMP, ATP, ADP and AMP, has low transport activity with cAMP, NADH and alpha-NAD(+), and has no activity with NADP(+), NADPH, nicotinamide, nicotinic acid, adenosine, thiamine mono- or diphosphate, inorganic phosphate, CoA, folate, NaCl, malate, malonate, citrate, fumarate, aspartate, glutamate, S-adenosylmethionine, lysine, arginine, and ornithine. The sequence is that of Nicotinamide adenine dinucleotide transporter 2, mitochondrial (NDT2) from Arabidopsis thaliana (Mouse-ear cress).